Here is a 523-residue protein sequence, read N- to C-terminus: GMP synthase [glutamine-hydrolyzing] (523 aa).

A Glutamine amidotransferase type-1 domain is found at 9–198 (PVLVVDFGAQ…LTEIAGLEQN (190 aa)). The active-site Nucleophile is the Cys-86. Catalysis depends on residues His-172 and Glu-174. One can recognise a GMPS ATP-PPase domain in the interval 199–397 (WTAANIAEEL…LGLPEEIVGR (199 aa)). An ATP-binding site is contributed by 227-233 (SGGVDSA).

As to quaternary structure, homodimer.

It carries out the reaction XMP + L-glutamine + ATP + H2O = GMP + L-glutamate + AMP + diphosphate + 2 H(+). It functions in the pathway purine metabolism; GMP biosynthesis; GMP from XMP (L-Gln route): step 1/1. Its function is as follows. Catalyzes the synthesis of GMP from XMP. The protein is GMP synthase [glutamine-hydrolyzing] of Corynebacterium glutamicum (strain R).